Here is a 353-residue protein sequence, read N- to C-terminus: Soluble interferon alpha/beta receptor OPG204 (353 aa).

The first 21 residues, 1–21 (MTMKMMVHIYFVSLSLLLLLF), serve as a signal peptide directing secretion. Ig-like C2-type domains lie at 67-139 (LGEP…KNGD) and 157-239 (PKTY…IVVS). 2 cysteine pairs are disulfide-bonded: Cys-75-Cys-131 and Cys-174-Cys-223. N-linked (GlcNAc...) asparagine; by host glycosylation is found at Asn-119, Asn-184, Asn-263, Asn-271, and Asn-323. An Ig-like V-type domain is found at 248–347 (PSQDHRFKLI…HNYYFEKTLT (100 aa)). The cysteines at positions 274 and 335 are disulfide-linked.

This sequence belongs to the interleukin-1 receptor family. In terms of assembly, interacts with host IFNA1.

The protein localises to the secreted. In terms of biological role, counteracts the antiviral effects of host IFN-alpha/beta and key IFN-inducible proteins involved in viral RNA degradation suxh as host OAS1. Acts as a soluble IFN-alpha receptor and thus inhibits the interaction between host IFN-alpha and its receptor. The chain is Soluble interferon alpha/beta receptor OPG204 (OPG204) from Homo sapiens (Human).